The following is a 442-amino-acid chain: tRNA-2-methylthio-N(6)-dimethylallyladenosine synthase (442 aa).

In terms of domain architecture, MTTase N-terminal spans 2–120; sequence KKVFIRTFGC…LPKMIVDKET (119 aa). [4Fe-4S] cluster-binding residues include C11, C49, C83, C157, C161, and C164. Residues 143–375 enclose the Radical SAM core domain; it reads RVEGGAAFVS…NEVIEAETAR (233 aa). A TRAM domain is found at 378–441; the sequence is QTMIGTVQRC…TFSLRGKVVE (64 aa).

Belongs to the methylthiotransferase family. MiaB subfamily. As to quaternary structure, monomer. The cofactor is [4Fe-4S] cluster.

It localises to the cytoplasm. It catalyses the reaction N(6)-dimethylallyladenosine(37) in tRNA + (sulfur carrier)-SH + AH2 + 2 S-adenosyl-L-methionine = 2-methylsulfanyl-N(6)-dimethylallyladenosine(37) in tRNA + (sulfur carrier)-H + 5'-deoxyadenosine + L-methionine + A + S-adenosyl-L-homocysteine + 2 H(+). Functionally, catalyzes the methylthiolation of N6-(dimethylallyl)adenosine (i(6)A), leading to the formation of 2-methylthio-N6-(dimethylallyl)adenosine (ms(2)i(6)A) at position 37 in tRNAs that read codons beginning with uridine. The chain is tRNA-2-methylthio-N(6)-dimethylallyladenosine synthase from Neisseria meningitidis serogroup C (strain 053442).